The sequence spans 454 residues: Probable glycine dehydrogenase (decarboxylating) subunit 1 (454 aa).

It belongs to the GcvP family. N-terminal subunit subfamily. In terms of assembly, the glycine cleavage system is composed of four proteins: P, T, L and H. In this organism, the P 'protein' is a heterodimer of two subunits.

It carries out the reaction N(6)-[(R)-lipoyl]-L-lysyl-[glycine-cleavage complex H protein] + glycine + H(+) = N(6)-[(R)-S(8)-aminomethyldihydrolipoyl]-L-lysyl-[glycine-cleavage complex H protein] + CO2. Functionally, the glycine cleavage system catalyzes the degradation of glycine. The P protein binds the alpha-amino group of glycine through its pyridoxal phosphate cofactor; CO(2) is released and the remaining methylamine moiety is then transferred to the lipoamide cofactor of the H protein. This is Probable glycine dehydrogenase (decarboxylating) subunit 1 from Sorangium cellulosum (strain So ce56) (Polyangium cellulosum (strain So ce56)).